Consider the following 619-residue polypeptide: DEAD-box ATP-dependent RNA helicase 14 (619 aa).

The residue at position 2 (Ala2) is an N-acetylalanine. The region spanning His17–Pro51 is the WW domain. The tract at residues Glu47–Ala139 is disordered. Residues Val61–Gln71 are compositionally biased toward low complexity. Positions Pro78–Arg93 are enriched in basic and acidic residues. The span at Pro125–Ala139 shows a compositional bias: low complexity. A Phosphoserine modification is found at Ser136. A Q motif motif is present at residues Met158–Ala186. Residues Trp189–Val363 form the Helicase ATP-binding domain. Ala202 to Thr209 lines the ATP pocket. The DEAD box signature appears at Asp311 to Asp314. In terms of domain architecture, Helicase C-terminal spans Arg392–Ala536. Residues Val528 to Arg619 are disordered. The segment covering Pro552 to Gly568 has biased composition (gly residues). Basic and acidic residues-rich tracts occupy residues Gly582 to Asn595 and Ser609 to Arg619.

Belongs to the DEAD box helicase family. DDX5/DBP2 subfamily. Ubiquitous. Preferentially expressed in flowers and roots.

The protein resides in the nucleus. It catalyses the reaction ATP + H2O = ADP + phosphate + H(+). In terms of biological role, ATP-dependent RNA helicase involved nonsense-mediated mRNA decay and ribosome biogenesis through rRNA processing. This Arabidopsis thaliana (Mouse-ear cress) protein is DEAD-box ATP-dependent RNA helicase 14 (RH14).